The following is a 337-amino-acid chain: Probable phospholipase A1 magnifin (337 aa).

The first 21 residues, 1-21 (MNLKYLLLFFCLVQVLHYCYS), serve as a signal peptide directing secretion. Residues 22-33 (HGDPSLSNELDR) constitute a propeptide that is removed on maturation. Residues Cys-39 and Cys-123 are joined by a disulfide bond. Ser-173 serves as the catalytic Nucleophile. Residue Asp-201 is the Charge relay system of the active site. Cystine bridges form between Cys-212–Cys-217 and Cys-255–Cys-264. The active-site Charge relay system is His-266. 3 disulfides stabilise this stretch: Cys-281/Cys-305, Cys-282/Cys-330, and Cys-298/Cys-303.

It belongs to the AB hydrolase superfamily. Lipase family. As to expression, expressed by the venom gland.

The protein resides in the secreted. The enzyme catalyses a 1,2-diacyl-sn-glycero-3-phosphocholine + H2O = a 2-acyl-sn-glycero-3-phosphocholine + a fatty acid + H(+). Its function is as follows. Catalyzes the hydrolysis of phosphatidylcholine with phospholipase A1 activity. May act as an allergen and induce hemolytic activity. In vivo, induces dose-dependent platelet aggregation (nanomolar concentration) and induces thrombosis. This Vespa magnifica (Hornet) protein is Probable phospholipase A1 magnifin.